Consider the following 305-residue polypeptide: Taste receptor type 2 member 136 (305 aa).

Over 1–9 (MMSFLVSIA) the chain is Extracellular. The chain crosses the membrane as a helical span at residues 10–30 (SIAMLVKIVLGTFANVFIVLV). The Cytoplasmic segment spans residues 31–46 (NFTDCIKKRKFLLADR). The chain crosses the membrane as a helical span at residues 47-67 (ILTVLAIFRFDLLWIILMNWS). Topologically, residues 68–69 (SS) are extracellular. Residues 70-90 (VFHVGLYFQVRFCICVVWIVT) form a helical membrane-spanning segment. Topologically, residues 91 to 99 (NHFNTWLAN) are cytoplasmic. The chain crosses the membrane as a helical span at residues 100-120 (ILSILYLLKIDNFSNLIFLGL). The Extracellular segment spans residues 121–127 (KGKIKCP). The chain crosses the membrane as a helical span at residues 128–148 (YIVLLPCFVLLFPNLIMVTIC). Topologically, residues 149–176 (ETTQANGHQGNLTGKTKLTYFTNLIAMT) are cytoplasmic. Residues 177–197 (FTLGSLVPFTTFMICFLLLIC) form a helical membrane-spanning segment. Topologically, residues 198–223 (SLCKHLRTMRLYGKGSQGPSASTHIK) are extracellular. A helical transmembrane segment spans residues 224–244 (VLQVLISFLLLFSMFILLLII). At 245-305 (SDYNYTKSLE…ARFWLKEKKP (61 aa)) the chain is on the cytoplasmic side.

The protein belongs to the G-protein coupled receptor T2R family.

It localises to the membrane. Functionally, putative taste receptor which may play a role in the perception of bitterness. The sequence is that of Taste receptor type 2 member 136 (Tas2r136) from Mus musculus (Mouse).